Here is a 656-residue protein sequence, read N- to C-terminus: MASSGLAYPDRFYAAAAYAGFGAGGATSSSAISRFQNDVALLLYGLYQQATVGPCNVPKPRAWNPVEQSKWTSWHGLGSMPSAEAMRLFVKILEEEDPGWYSRVPEFNPEPVVDIEMHKPKEDPKVILASTNGTSVPEPKTISENGSSVETQDKVVILEGLSAVSVHEEWTPLSVNGQRPKPRYEHGATVVQDKMYIFGGNHNGRYLSDLQALDLKSLTWSKIDAKFQAGSTDSSKSAQVSSCAGHSLISWGNKFFSVAGHTKDPSENITVKEFDPHTCTWSIVKTYGKPPVSRGGQSVTLVGTTLVLFGGEDAKRCLLNDLHILDLETMTWDDVDAIGTPPPRSDHAAACHADRYLLIFGGGSHATCFNDLHVLDLQTMEWSRPKQQGLAPSPRAGHAGATVGENWYIVGGGNNKSGVSETLVLNMSTLTWSVVSSVEGRVPLASEGMTLVHSNYNGDDYLISFGGYNGRYSNEVFALKLTLKSDLQSKTKEHASDGTSSVLEPEVELSHDGKIREIAMDSADSDLKKDDANELLVALKAEKEELEAALNREQVQTIQLKEEIAEAEARNAELTKELQTVRGQLAAEQSRCFKLEVDVAELRQKLQSMDALEREVELLRRQKAASEQAALEAKQRQSSSGMWGWLVGTPPDKSES.

Residues 8–102 (YPDRFYAAAA…LEEEDPGWYS (95 aa)) form the ACB domain. An acyl-CoA is bound by residues 44-48 (YGLYQ) and Lys-70. Residues 129-148 (ASTNGTSVPEPKTISENGSS) are disordered. Kelch repeat units lie at residues 194–241 (KMYI…AQVS), 254–304 (KFFS…LVGT), 305–354 (TLVL…CHAD), 356–405 (YLLI…TVGE), 406–454 (NWYI…LVHS), and 461–507 (YLIS…EPEV). The stretch at 527 to 636 (LKKDDANELL…EQAALEAKQR (110 aa)) forms a coiled coil. Positions 627-656 (EQAALEAKQRQSSSGMWGWLVGTPPDKSES) are disordered.

Belongs to the ACBP family. In terms of tissue distribution, highly expressed in leaves. Expressed in roots and seeds.

The protein resides in the peroxisome. Functionally, binds medium- and long-chain acyl-CoA esters with high affinity. Can interact in vitro with linoleoyl-CoA and linolenoyl-CoA. Binds phosphatidic acid (PA) and phosphatidylcholine (PC) in vitro. May play a role in the biosynthesis of phospholipids. May be involved in lipid degradation via peroxisomal beta-oxydation. The sequence is that of Acyl-CoA-binding domain-containing protein 6 from Oryza sativa subsp. japonica (Rice).